A 282-amino-acid polypeptide reads, in one-letter code: Bifunctional protein FolD (282 aa).

Residues Gly165–Ser167 and Ile231 contribute to the NADP(+) site.

This sequence belongs to the tetrahydrofolate dehydrogenase/cyclohydrolase family. In terms of assembly, homodimer.

It catalyses the reaction (6R)-5,10-methylene-5,6,7,8-tetrahydrofolate + NADP(+) = (6R)-5,10-methenyltetrahydrofolate + NADPH. It carries out the reaction (6R)-5,10-methenyltetrahydrofolate + H2O = (6R)-10-formyltetrahydrofolate + H(+). The protein operates within one-carbon metabolism; tetrahydrofolate interconversion. In terms of biological role, catalyzes the oxidation of 5,10-methylenetetrahydrofolate to 5,10-methenyltetrahydrofolate and then the hydrolysis of 5,10-methenyltetrahydrofolate to 10-formyltetrahydrofolate. This chain is Bifunctional protein FolD, found in Francisella tularensis subsp. mediasiatica (strain FSC147).